We begin with the raw amino-acid sequence, 286 residues long: Autophagy protein 5 (286 aa).

Residue lysine 160 forms a Glycyl lysine isopeptide (Lys-Gly) (interchain with G-Cter in ATG12) linkage.

Belongs to the ATG5 family. In terms of assembly, conjugated with ATG12. Conjugated to ATG12; which is essential for autophagy.

The protein localises to the preautophagosomal structure membrane. Its function is as follows. Involved in cytoplasm to vacuole transport (Cvt) and autophagic vesicle formation. Autophagy is essential for maintenance of amino acid levels and protein synthesis under nitrogen starvation. Required for selective autophagic degradation of the nucleus (nucleophagy). Also required for mitophagy, which eliminates defective or superfluous mitochondria in order to fulfill cellular energy requirements and prevent excess ROS production. Conjugation with ATG12, through a ubiquitin-like conjugating system involving ATG7 as an E1-like activating enzyme and ATG10 as an E2-like conjugating enzyme, is essential for its function. The ATG12-ATG5 conjugate acts as an E3-like enzyme which is required for lipidation of ATG8 and ATG8 association to the vesicle membranes. The polypeptide is Autophagy protein 5 (ATG5) (Lodderomyces elongisporus (strain ATCC 11503 / CBS 2605 / JCM 1781 / NBRC 1676 / NRRL YB-4239) (Yeast)).